We begin with the raw amino-acid sequence, 863 residues long: Protein translocase subunit SecA (863 aa).

ATP contacts are provided by residues glutamine 88, 106-110 (GEGKT), and aspartate 507. Residues 806–863 (KSHEQNEQFLSNTTESGVNENGEAQITKVPRNSPCPCGSGKKYKECHGKSGPKKGILA) form a disordered region. The segment covering 812–829 (EQFLSNTTESGVNENGEA) has biased composition (polar residues). Zn(2+) is bound by residues cysteine 840, cysteine 842, cysteine 851, and histidine 852.

Belongs to the SecA family. In terms of assembly, monomer and homodimer. Part of the essential Sec protein translocation apparatus which comprises SecA, SecYEG and auxiliary proteins SecDF-YajC and YidC. Zn(2+) serves as cofactor.

It is found in the cell inner membrane. Its subcellular location is the cytoplasm. It catalyses the reaction ATP + H2O + cellular proteinSide 1 = ADP + phosphate + cellular proteinSide 2.. Part of the Sec protein translocase complex. Interacts with the SecYEG preprotein conducting channel. Has a central role in coupling the hydrolysis of ATP to the transfer of proteins into and across the cell membrane, serving as an ATP-driven molecular motor driving the stepwise translocation of polypeptide chains across the membrane. The protein is Protein translocase subunit SecA of Campylobacter lari (strain RM2100 / D67 / ATCC BAA-1060).